We begin with the raw amino-acid sequence, 316 residues long: Ribosomal RNA small subunit methyltransferase H (316 aa).

S-adenosyl-L-methionine contacts are provided by residues 35–37 (GGH), aspartate 55, phenylalanine 79, aspartate 101, and glutamine 108.

This sequence belongs to the methyltransferase superfamily. RsmH family.

The protein resides in the cytoplasm. It catalyses the reaction cytidine(1402) in 16S rRNA + S-adenosyl-L-methionine = N(4)-methylcytidine(1402) in 16S rRNA + S-adenosyl-L-homocysteine + H(+). Specifically methylates the N4 position of cytidine in position 1402 (C1402) of 16S rRNA. This chain is Ribosomal RNA small subunit methyltransferase H, found in Aliivibrio fischeri (strain ATCC 700601 / ES114) (Vibrio fischeri).